The sequence spans 359 residues: 3-dehydroquinate synthase (359 aa).

Residues 71–76 (DGEAYK), 105–109 (GVIGD), 129–130 (TT), Lys142, and Lys151 contribute to the NAD(+) site. Glu184, His247, and His264 together coordinate Zn(2+).

It belongs to the sugar phosphate cyclases superfamily. Dehydroquinate synthase family. It depends on Co(2+) as a cofactor. The cofactor is Zn(2+). NAD(+) serves as cofactor.

It localises to the cytoplasm. The enzyme catalyses 7-phospho-2-dehydro-3-deoxy-D-arabino-heptonate = 3-dehydroquinate + phosphate. It participates in metabolic intermediate biosynthesis; chorismate biosynthesis; chorismate from D-erythrose 4-phosphate and phosphoenolpyruvate: step 2/7. Its function is as follows. Catalyzes the conversion of 3-deoxy-D-arabino-heptulosonate 7-phosphate (DAHP) to dehydroquinate (DHQ). This chain is 3-dehydroquinate synthase, found in Burkholderia vietnamiensis (strain G4 / LMG 22486) (Burkholderia cepacia (strain R1808)).